The sequence spans 323 residues: Peroxisomal and mitochondrial division factor 2 (323 aa).

Disordered regions lie at residues 1–55 (MAEE…NDAI), 73–92 (ESKA…KSDE), and 120–143 (TART…SQKG). The Cytoplasmic portion of the chain corresponds to 1–297 (MAEERSLNGE…WSPNVTAVGS (297 aa)). Residues 13 to 26 (GQDDESFFDSDQQG) show a composition bias toward acidic residues. The stretch at 28–278 (DGKSTELNQK…INGLKNVVEE (251 aa)) forms a coiled coil. The chain crosses the membrane as a helical span at residues 298-318 (GGAVAAVAVAVAGAAVVCYIY). The Mitochondrial intermembrane segment spans residues 319–323 (HSRRV).

In terms of assembly, homodimer. Interacts with PMD1.

Its subcellular location is the mitochondrion outer membrane. In terms of biological role, involved in morphogenesis and proliferation of mitochondria. Does not act redundantly with PMD1. Is not involved in peroxisomal proliferation. In Arabidopsis thaliana (Mouse-ear cress), this protein is Peroxisomal and mitochondrial division factor 2.